The sequence spans 434 residues: MKFLHTVAQTATLLLSLGASVEGFNRARNDACKPHHPFRPLPASTPRTKTCHVRSHGDGTDDAAFVLSALRKCNNGGKVVFDADKEYTIGTALDMTFLRHVDLEILGRIQFTNDTDYWQAHAFRHGFQNATTFFQLGGTDVNVYGSGTLDGNGQVWYDLYAAEPLTLRPILLGVIGLHGGTIGPLKLRYSPQWYQLVANSTDVLFDGIDISGYSSSKNTAKNTDGWDTYRSSNIVIQNSVVNNGDDCVSFKPNSTDILVQNMHCNGSHGISVGSLGQYKGEIDIVKNILVYNISMYNASDMARIKVWPGVDSALSEDLQGGGGSGAVSNITYDRMYIENVDWAIEVTQCYGQKNQTLCNQYPSNLTISDVHIKNMWGTTSGKRDPNVGTIVCSSPDVCSDIYVTNVNVTSPSGTDDYICTNVDESLLDVNCSSG.

A signal peptide spans 1 to 23 (MKFLHTVAQTATLLLSLGASVEG). Positions 35–54 (HHPFRPLPASTPRTKTCHVR) are disordered. Residues asparagine 113, asparagine 129, and asparagine 199 are each glycosylated (N-linked (GlcNAc...) asparagine). The PbH1 1 repeat unit spans residues 231–252 (SSNIVIQNSVVNNGDDCVSFKP). Residue aspartate 245 is the Proton donor of the active site. Cysteine 247 and cysteine 264 are joined by a disulfide. 2 N-linked (GlcNAc...) asparagine glycosylation sites follow: asparagine 253 and asparagine 265. Residues 254 to 274 (STDILVQNMHCNGSHGISVGS) form a PbH1 2 repeat. Histidine 268 is a catalytic residue. N-linked (GlcNAc...) asparagine glycans are attached at residues asparagine 292, asparagine 297, asparagine 329, asparagine 354, and asparagine 364. A PbH1 3 repeat occupies 327–348 (VSNITYDRMYIENVDWAIEVTQ). The stretch at 362 to 394 (PSNLTISDVHIKNMWGTTSGKRDPNVGTIVCSS) is one PbH1 4 repeat. An intrachain disulfide couples cysteine 392 to cysteine 398. N-linked (GlcNAc...) asparagine glycosylation is found at asparagine 407 and asparagine 430.

The protein belongs to the glycosyl hydrolase 28 family.

The protein resides in the secreted. The enzyme catalyses [(1-&gt;4)-alpha-D-galacturonosyl](n) + H2O = alpha-D-galacturonate + [(1-&gt;4)-alpha-D-galacturonosyl](n-1). Functionally, specific in hydrolyzing the terminal glycosidic bond of polygalacturonic acid and oligogalacturonates. The chain is Probable exopolygalacturonase X (pgaX) from Aspergillus terreus (strain NIH 2624 / FGSC A1156).